A 330-amino-acid polypeptide reads, in one-letter code: Mycothiol acetyltransferase (330 aa).

N-acetyltransferase domains follow at residues L5 to R142 and V171 to P328. E36 contacts 1D-myo-inositol 2-(L-cysteinylamino)-2-deoxy-alpha-D-glucopyranoside. V80–V82 lines the acetyl-CoA pocket. The segment at R142–P161 is disordered. Residues E198, K238, and E254 each coordinate 1D-myo-inositol 2-(L-cysteinylamino)-2-deoxy-alpha-D-glucopyranoside. Acetyl-CoA-binding positions include V258 to V260 and Q265 to R271. Y292 lines the 1D-myo-inositol 2-(L-cysteinylamino)-2-deoxy-alpha-D-glucopyranoside pocket. N297–R302 serves as a coordination point for acetyl-CoA.

It belongs to the acetyltransferase family. MshD subfamily. In terms of assembly, monomer.

The enzyme catalyses 1D-myo-inositol 2-(L-cysteinylamino)-2-deoxy-alpha-D-glucopyranoside + acetyl-CoA = mycothiol + CoA + H(+). Catalyzes the transfer of acetyl from acetyl-CoA to desacetylmycothiol (Cys-GlcN-Ins) to form mycothiol. This Nocardiopsis dassonvillei (strain ATCC 23218 / DSM 43111 / CIP 107115 / JCM 7437 / KCTC 9190 / NBRC 14626 / NCTC 10488 / NRRL B-5397 / IMRU 509) (Actinomadura dassonvillei) protein is Mycothiol acetyltransferase.